The primary structure comprises 452 residues: Exodeoxyribonuclease 7 large subunit (452 aa).

The protein belongs to the XseA family. As to quaternary structure, heterooligomer composed of large and small subunits.

It localises to the cytoplasm. It carries out the reaction Exonucleolytic cleavage in either 5'- to 3'- or 3'- to 5'-direction to yield nucleoside 5'-phosphates.. Functionally, bidirectionally degrades single-stranded DNA into large acid-insoluble oligonucleotides, which are then degraded further into small acid-soluble oligonucleotides. This is Exodeoxyribonuclease 7 large subunit from Bacillus cereus (strain G9842).